The primary structure comprises 150 residues: Macrodomain Ter protein (150 aa).

It belongs to the MatP family. In terms of assembly, homodimer.

Its subcellular location is the cytoplasm. In terms of biological role, required for spatial organization of the terminus region of the chromosome (Ter macrodomain) during the cell cycle. Prevents early segregation of duplicated Ter macrodomains during cell division. Binds specifically to matS, which is a 13 bp signature motif repeated within the Ter macrodomain. In Escherichia coli O81 (strain ED1a), this protein is Macrodomain Ter protein.